A 465-amino-acid chain; its full sequence is Probable M18 family aminopeptidase 1 (465 aa).

Residues His105, His180, and His441 each contribute to the Zn(2+) site.

This sequence belongs to the peptidase M18 family. It depends on Zn(2+) as a cofactor.

This Clostridium acetobutylicum (strain ATCC 824 / DSM 792 / JCM 1419 / IAM 19013 / LMG 5710 / NBRC 13948 / NRRL B-527 / VKM B-1787 / 2291 / W) protein is Probable M18 family aminopeptidase 1 (apeA).